A 421-amino-acid polypeptide reads, in one-letter code: MLSSFFIIADQGDILIEKHWRGLMNRSICEYFWDQVLQSKQNGSSVPPIISTPKYYLINIQKQNVYLLGVCQSEVSPLLVVDFLQRIYDTFVEYFGSNITSATIKENFVHVYQLLDEMADNGFPFTTELNFLKEMIKPPGVLSNVISSVTGTSNITDILPNGSLGAIQWRKTGIKYTQNKIFFDIIEEIDCIIDSNGYIVSSEINGEILCHCNLSGMPDLTMTFNNPRMLDDVSFHPCVRYSRWENDRVLSFIPPDGNFKLLSYRVKGINQFPVYVKPQISYSEGSSSVGRVNVTVGAKGYNVQNKLSIEDVVATIPFSKTTSSTNLTANIGSFGMDEQSKILRWNIGKIPKEKTPFLNGTVSLIAGSMTPESTPSIMLQFKIPQYAISGLTIDSLACSERYKPFKGVKCTTKAGKFQVRS.

The MHD domain occupies 178-420 (QNKIFFDIIE…TTKAGKFQVR (243 aa)).

Belongs to the adaptor complexes medium subunit family. As to quaternary structure, adaptor protein complex 3 (AP-3) is a heterotetramer composed of two large adaptins (delta-type subunit and beta-type subunit), a medium adaptin (mu-type subunit) and a small adaptin (sigma-type subunit).

It localises to the endosome membrane. In terms of biological role, part of the AP-3 complex, an adaptor-related complex which is essential for the compartmentalization of the endocytic pathway. This Dictyostelium discoideum (Social amoeba) protein is AP-3 complex subunit mu (apm3).